A 115-amino-acid chain; its full sequence is Large ribosomal subunit protein uL22 (115 aa).

This sequence belongs to the universal ribosomal protein uL22 family. As to quaternary structure, part of the 50S ribosomal subunit.

This protein binds specifically to 23S rRNA; its binding is stimulated by other ribosomal proteins, e.g. L4, L17, and L20. It is important during the early stages of 50S assembly. It makes multiple contacts with different domains of the 23S rRNA in the assembled 50S subunit and ribosome. In terms of biological role, the globular domain of the protein is located near the polypeptide exit tunnel on the outside of the subunit, while an extended beta-hairpin is found that lines the wall of the exit tunnel in the center of the 70S ribosome. The protein is Large ribosomal subunit protein uL22 of Thioalkalivibrio sulfidiphilus (strain HL-EbGR7).